A 538-amino-acid polypeptide reads, in one-letter code: Retinoblastoma-binding protein 5 (538 aa).

2 WD repeats span residues 22–63 (DCIS…KIIS) and 64–103 (AHIHPVCSLCWSRDGHKLVSASTDNIVSQWDVLSGDCDQR). A Glycyl lysine isopeptide (Lys-Gly) (interchain with G-Cter in SUMO2) cross-link involves residue Lys129. WD repeat units lie at residues 148-188 (DDDS…LVAS), 196-235 (SNTTAIKSIEFARKGSCFLINTADRIIRVYDGREILTCGR), 249-291 (VNRT…KILH), and 293-331 (TRGELLLDVAWHPVRPIIASISSGVVSIWAQNQVENWSA). Thr252 is subject to Phosphothreonine; by CDK1. The interaction with ASH2L stretch occupies residues 330–366 (SAFAPDFKELDENVEYEERESEFDIEDEDKSEPEQTG). Residues 344–360 (EYEERESEFDIEDEDKS) are compositionally biased toward acidic residues. The segment at 344–377 (EYEERESEFDIEDEDKSEPEQTGADAAEDEEVDV) is disordered. A Phosphoserine modification is found at Ser350. The segment at 371-380 (EDEEVDVTSV) is interaction with WDR5. Residues Ser388 and Ser389 each carry the phosphoserine modification. The interval 408 to 538 (VEDPEENPYG…TAGGAISELL (131 aa)) is disordered. A compositionally biased stretch (basic residues) spans 479–490 (SKKKQAGRPKGS). A compositionally biased stretch (basic and acidic residues) spans 491-510 (KGKEKDSPFKPKLYKGDRGL). At Ser497 the chain carries Phosphoserine; by CDK1. Ser525 bears the Phosphoserine mark.

Component of the SET1 complex, at least composed of the catalytic subunit (SETD1A or SETD1B), WDR5, WDR82, RBBP5, ASH2L/ASH2, CXXC1/CFP1, HCFC1 and DPY30. Core component of several methyltransferase-containing complexes including MLL1/MLL, MLL2/3 (also named ASCOM complex) and MLL4/WBP7. Each complex is at least composed of ASH2L, RBBP5, WDR5, DPY30, one or more specific histone methyltransferases (KMT2A/MLL1, KMT2D/MLL2, KMT2C/MLL3 and KMT2B/MLL4), and the facultative components PAGR1, BACC1, CHD8, E2F6, HCFC1, HCFC2, HSP70, INO80C, KDM6A, KANSL1, LAS1L, MAX, MCRS1, MEN1, MGA, MYST1/MOF, NCOA6, PAXIP1/PTIP, PELP1, PHF20, PRP31, RING2, RUVB1/TIP49A, RUVB2/TIP49B, SENP3, TAF1, TAF4, TAF6, TAF7, TAF9, TEX10 and alpha- and beta-tubulin. Component of a histone methylation complex composed of at least ZNF335, RBBP5, ASH2L and WDR5; the complex may have histone H3-specific methyltransferase activity, however does not have specificity for 'Lys-4' of histone H3. Interacts with ZNF335. Interacts with ASH2L; the interaction is direct. Interacts with WDR5; the interaction is direct. Components of the ZNF335-RBBP5-ASH2L-WDR5 histone methylation complex may associate with components of a nuclear receptor-mediated transcription complex to form a complex at least composed of ZNF335, HCFC1, CCAR2, EMSY, MKI67, RBBP5, ASH2L and WDR5. Within this complex interacts with EMSY. Found in a complex with RBBP5, ASH2L, DPY30, KMT2A, KMT2D and WDR5. Interacts with SETD1A. Interacts with WDR82. As to expression, ubiquitously expressed.

It localises to the nucleus. Functionally, in embryonic stem (ES) cells, plays a crucial role in the differentiation potential, particularly along the neural lineage, regulating gene induction and H3 'Lys-4' methylation at key developmental loci, including that mediated by retinoic acid. Does not affect ES cell self-renewal. Component or associated component of some histone methyltransferase complexes which regulates transcription through recruitment of those complexes to gene promoters. As part of the MLL1/MLL complex, involved in mono-, di- and trimethylation at 'Lys-4' of histone H3. Histone H3 'Lys-4' methylation represents a specific tag for epigenetic transcriptional activation. In association with ASH2L and WDR5, stimulates the histone methyltransferase activities of KMT2A, KMT2B, KMT2C, KMT2D, SETD1A and SETD1B. The sequence is that of Retinoblastoma-binding protein 5 (RBBP5) from Homo sapiens (Human).